A 285-amino-acid polypeptide reads, in one-letter code: Phasyl DNA replicon protein arp (285 aa).

Functionally, essential for autonomous replication of the phasyl DNA replicon. This chain is Phasyl DNA replicon protein arp (arp), found in Escherichia coli.